The following is a 308-amino-acid chain: Ribosomal RNA small subunit methyltransferase H (308 aa).

S-adenosyl-L-methionine is bound by residues 32–34 (AGH), Asp51, Phe78, Asp99, and Gln106.

The protein belongs to the methyltransferase superfamily. RsmH family.

It localises to the cytoplasm. It catalyses the reaction cytidine(1402) in 16S rRNA + S-adenosyl-L-methionine = N(4)-methylcytidine(1402) in 16S rRNA + S-adenosyl-L-homocysteine + H(+). In terms of biological role, specifically methylates the N4 position of cytidine in position 1402 (C1402) of 16S rRNA. The sequence is that of Ribosomal RNA small subunit methyltransferase H from Mesoplasma florum (strain ATCC 33453 / NBRC 100688 / NCTC 11704 / L1) (Acholeplasma florum).